The following is a 110-amino-acid chain: ATP-dependent Clp protease adapter protein ClpS (110 aa).

The protein belongs to the ClpS family. In terms of assembly, binds to the N-terminal domain of the chaperone ClpA.

Involved in the modulation of the specificity of the ClpAP-mediated ATP-dependent protein degradation. The sequence is that of ATP-dependent Clp protease adapter protein ClpS from Bartonella henselae (strain ATCC 49882 / DSM 28221 / CCUG 30454 / Houston 1) (Rochalimaea henselae).